Reading from the N-terminus, the 335-residue chain is Phosphate acyltransferase (335 aa).

The protein belongs to the PlsX family. In terms of assembly, homodimer. Probably interacts with PlsY.

It is found in the cytoplasm. It catalyses the reaction a fatty acyl-[ACP] + phosphate = an acyl phosphate + holo-[ACP]. It functions in the pathway lipid metabolism; phospholipid metabolism. Functionally, catalyzes the reversible formation of acyl-phosphate (acyl-PO(4)) from acyl-[acyl-carrier-protein] (acyl-ACP). This enzyme utilizes acyl-ACP as fatty acyl donor, but not acyl-CoA. This Streptococcus uberis (strain ATCC BAA-854 / 0140J) protein is Phosphate acyltransferase.